The following is a 512-amino-acid chain: 2,3-bisphosphoglycerate-independent phosphoglycerate mutase (512 aa).

Aspartate 18 and serine 68 together coordinate Mn(2+). The active-site Phosphoserine intermediate is serine 68. Residues histidine 129, 159-160 (RD), arginine 191, arginine 197, 265-268 (RPDR), and lysine 338 each bind substrate. Residues aspartate 403, histidine 407, aspartate 444, histidine 445, and histidine 462 each contribute to the Mn(2+) site.

It belongs to the BPG-independent phosphoglycerate mutase family. In terms of assembly, monomer. Mn(2+) serves as cofactor.

It catalyses the reaction (2R)-2-phosphoglycerate = (2R)-3-phosphoglycerate. The protein operates within carbohydrate degradation; glycolysis; pyruvate from D-glyceraldehyde 3-phosphate: step 3/5. Functionally, catalyzes the interconversion of 2-phosphoglycerate and 3-phosphoglycerate. This Mesomycoplasma hyopneumoniae (strain 232) (Mycoplasma hyopneumoniae) protein is 2,3-bisphosphoglycerate-independent phosphoglycerate mutase.